A 195-amino-acid chain; its full sequence is Transcription factor LBX2 (195 aa).

Disordered stretches follow at residues 1–89 (MNSV…KSRT) and 164–195 (PALP…QVDD). A DNA-binding region (homeobox) is located at residues 84-143 (RRKSRTAFTAQQVLELERRFVFQKYLAPSERDGLAARLGLANAQVVTWFQNRRAKLKRDV). Acidic residues predominate over residues 186 to 195 (LSDEEIQVDD).

As to expression, expressed in the developing urogenital system, eye and brain.

It localises to the nucleus. Functionally, transcription factor. In Mus musculus (Mouse), this protein is Transcription factor LBX2 (Lbx2).